The primary structure comprises 207 residues: Small ribosomal subunit protein uS4 (207 aa).

The segment at 20 to 45 (TPKAARYMEKRPYAPGEHGRTKRKAD) is disordered. Residues 93-158 (MRLDALVLRA…TEPFQVAAAG (66 aa)) enclose the S4 RNA-binding domain.

Belongs to the universal ribosomal protein uS4 family. In terms of assembly, part of the 30S ribosomal subunit. Contacts protein S5. The interaction surface between S4 and S5 is involved in control of translational fidelity.

Functionally, one of the primary rRNA binding proteins, it binds directly to 16S rRNA where it nucleates assembly of the body of the 30S subunit. With S5 and S12 plays an important role in translational accuracy. This Leifsonia xyli subsp. xyli (strain CTCB07) protein is Small ribosomal subunit protein uS4.